The chain runs to 163 residues: Peptide deformylase 3 (163 aa).

Fe cation is bound by residues C91 and H133. The active site involves E134. Residue H137 participates in Fe cation binding.

Belongs to the polypeptide deformylase family. Fe(2+) is required as a cofactor.

It catalyses the reaction N-terminal N-formyl-L-methionyl-[peptide] + H2O = N-terminal L-methionyl-[peptide] + formate. Removes the formyl group from the N-terminal Met of newly synthesized proteins. Requires at least a dipeptide for an efficient rate of reaction. N-terminal L-methionine is a prerequisite for activity but the enzyme has broad specificity at other positions. In Shewanella oneidensis (strain ATCC 700550 / JCM 31522 / CIP 106686 / LMG 19005 / NCIMB 14063 / MR-1), this protein is Peptide deformylase 3.